The primary structure comprises 634 residues: Protection of telomeres protein 1 (634 aa).

It belongs to the telombin family. As to quaternary structure, homodimer or homooligomer. Component of the shelterin complex (telosome) composed of TERF1, TERF2, TINF2, TERF2IP, ACD and POT1. Binds single-stranded telomeric DNA as a monomer. Associated component of the telomerase holoenzyme complex. Found in a complex with TERF1, TINF2 and TNKS1. Interacts with TNKS1. Forms heterodimers with ACD. Identified in a complex with ACD and single-stranded telomeric DNA.

The protein localises to the nucleus. It localises to the chromosome. It is found in the telomere. Component of the telomerase ribonucleoprotein (RNP) complex that is essential for the replication of chromosome termini. Is a component of the double-stranded telomeric DNA-binding TRF1 complex which is involved in the regulation of telomere length by cis-inhibition of telomerase. Also acts as a single-stranded telomeric DNA-binding protein and thus may act as a downstream effector of the TRF1 complex and may transduce information about telomere maintenance and/or length to the telomere terminus. Component of the shelterin complex (telosome) that is involved in the regulation of telomere length and protection. Shelterin associates with arrays of double-stranded TTAGGG repeats added by telomerase and protects chromosome ends; without its protective activity, telomeres are no longer hidden from the DNA damage surveillance and chromosome ends are inappropriately processed by DNA repair pathways. Binds to two or more telomeric single-stranded 5'-TTAGGG-3' repeats (G-strand) and with high specificity to a minimal telomeric single-stranded 5'-TAGGGTTAG-3' sequence. Binds telomeric single-stranded sequences internally or at proximity of a 3'-end. Its activity is TERT dependent but it does not increase TERT activity by itself. In contrast, the ACD-POT1 heterodimer enhances telomere elongation by increasing telomerase processivity. This chain is Protection of telomeres protein 1 (POT1), found in Macaca fascicularis (Crab-eating macaque).